We begin with the raw amino-acid sequence, 118 residues long: Large ribosomal subunit protein bL19 (118 aa).

Belongs to the bacterial ribosomal protein bL19 family.

Functionally, this protein is located at the 30S-50S ribosomal subunit interface and may play a role in the structure and function of the aminoacyl-tRNA binding site. The protein is Large ribosomal subunit protein bL19 of Dictyoglomus turgidum (strain DSM 6724 / Z-1310).